The primary structure comprises 139 residues: Thioredoxin-like protein Clot (139 aa).

In terms of domain architecture, Thioredoxin spans 1–136 (MTVEKVDATV…LADKVDAVVN (136 aa)). Residues Cys49 and Cys52 each act as nucleophile in the active site. Cysteines 49 and 52 form a disulfide.

Belongs to the thioredoxin family.

Functionally, probable thiol-disulfide oxidoreductase that may participate in various redox reactions. This Oryza sativa subsp. japonica (Rice) protein is Thioredoxin-like protein Clot.